The following is a 130-amino-acid chain: MLINAARLLLPAAALVHLSLAWATSDRCNGYSSTLIQIKHAGDIYKQPSVPGLPPPGVNPYSLIDTLLKNGEDWCKHCASPRVSVDAGRYKAQMDKLLSYAHPYSASSWDSVQSLGDALEHLCKASRKEN.

An N-terminal signal peptide occupies residues 1–23; sequence MLINAARLLLPAAALVHLSLAWA. The plant immunity suppression domain stretch occupies residues 68-85; the sequence is LKNGEDWCKHCASPRVSV.

The protein localises to the secreted. Its subcellular location is the host cell. The protein resides in the host periplasm. Secreted effector required for full virulence of U.virens. Inhibits host pathogen-associated molecular pattern-triggered immunity including flg22- and chitin-induced defense gene expression and oxidative burst. This chain is Secreted cysteine-rich effector 2, found in Ustilaginoidea virens (Rice false smut fungus).